A 568-amino-acid chain; its full sequence is Protein AF-9 (568 aa).

The YEATS domain occupies 1–138 (MASSCAVQVK…EDFRRKLLKA (138 aa)). 2 histone H3K9cr binding regions span residues 78 to 80 (YAG) and 106 to 108 (LHL). Positions 138 to 475 (AGGDPNRSIH…PPPPLLKTNN (338 aa)) are disordered. The span at 149–190 (SSSSSSSSSSSSSSSSSSSSSSSSSSSSSSSSSSSSSSSSSS) shows a compositional bias: low complexity. The segment covering 202-265 (EHKEKPSKDS…PKPMSKEPKP (64 aa)) has biased composition (basic and acidic residues). Phosphoserine occurs at positions 288 and 294. Residues 295–300 (AKKRKK) carry the Nuclear localization signal motif. A compositionally biased stretch (low complexity) spans 303-313 (SEALFKSFSSA). Residues 322 to 349 (ADKKQIKDKSHVKMGKVKIESETSEKKK) are compositionally biased toward basic and acidic residues. Lys339 is covalently cross-linked (Glycyl lysine isopeptide (Lys-Gly) (interchain with G-Cter in SUMO2)). Residues 357 to 368 (DIVDPNDSDVEE) show a composition bias toward acidic residues. Residues 371 to 395 (SSKSDSEQPSPASSSSSSSSSFTPS) are compositionally biased toward low complexity. Residues Ser412 and Ser419 each carry the phosphoserine modification. Residues 414–429 (DNEEESDEVEDNDNDS) are compositionally biased toward acidic residues. The span at 445 to 461 (VSLSDGSDSESSSASSP) shows a compositional bias: low complexity. Ser483 bears the Phosphoserine mark.

As to quaternary structure, component of the super elongation complex (SEC), at least composed of EAF1, EAF2, CDK9, MLLT3/AF9, AFF (AFF1 or AFF4), the P-TEFb complex and ELL (ELL, ELL2 or ELL3). Interacts with BCOR. Interacts with CBX8. Interacts with ALKBH4. Enriched in undifferentiated hematopoietic stem cells in fetal liver, cord blood and bone marrow.

The protein resides in the nucleus. It is found in the chromosome. With respect to regulation, crotonylated lysine binding is strongly inhibited by the peptide XL-07i, carrying a 2-furancarbonyl side chain and capped with a hydrophobic carboxybenzyl group. XL-07i targets the unique pi-pi-pi stacking interaction at the crotonylation recognition site. Its function is as follows. Chromatin reader component of the super elongation complex (SEC), a complex required to increase the catalytic rate of RNA polymerase II transcription by suppressing transient pausing by the polymerase at multiple sites along the DNA. Specifically recognizes and binds acylated histone H3, with a preference for histone H3 that is crotonylated. Crotonylation marks active promoters and enhancers and confers resistance to transcriptional repressors. Recognizes and binds histone H3 crotonylated at 'Lys-9' (H3K9cr), and with slightly lower affinity histone H3 crotonylated at 'Lys-18' (H3K18cr). Also recognizes and binds histone H3 acetylated and butyrylated at 'Lys-9' (H3K9ac and H3K9bu, respectively), but with lower affinity than crotonylated histone H3. In the SEC complex, MLLT3 is required to recruit the complex to crotonylated histones. Recruitment of the SEC complex to crotonylated histones promotes recruitment of DOT1L on active chromatin to deposit histone H3 'Lys-79' methylation (H3K79me). Plays a key role in hematopoietic stem cell (HSC) maintenance by preserving, rather than conferring, HSC stemness. Acts by binding to the transcription start site of active genes in HSCs and sustaining level of H3K79me2, probably by recruiting DOT1L. The chain is Protein AF-9 from Homo sapiens (Human).